The chain runs to 99 residues: MALTKAEMVERLFDEVGLNKREAKEFVDAFFDLLRDALEQGKEIKLSGFGNFELRCKNQRPGRNPKTGEEIPISARTVVTFRSGQKLKERVDAYVGSRQ.

The protein belongs to the bacterial histone-like protein family. As to quaternary structure, heterodimer of an alpha and a beta chain.

Functionally, this protein is one of the two subunits of integration host factor, a specific DNA-binding protein that functions in genetic recombination as well as in transcriptional and translational control. This chain is Integration host factor subunit alpha, found in Xylella fastidiosa (strain M12).